The sequence spans 624 residues: 1-deoxy-D-xylulose-5-phosphate synthase (624 aa).

Residues His-80 and 121-123 (GHS) each bind thiamine diphosphate. A Mg(2+)-binding site is contributed by Asp-152. Residues 153 to 154 (GA), Asn-181, Tyr-289, and Glu-371 each bind thiamine diphosphate. Residue Asn-181 coordinates Mg(2+).

The protein belongs to the transketolase family. DXPS subfamily. Homodimer. Requires Mg(2+) as cofactor. Thiamine diphosphate serves as cofactor.

It catalyses the reaction D-glyceraldehyde 3-phosphate + pyruvate + H(+) = 1-deoxy-D-xylulose 5-phosphate + CO2. It participates in metabolic intermediate biosynthesis; 1-deoxy-D-xylulose 5-phosphate biosynthesis; 1-deoxy-D-xylulose 5-phosphate from D-glyceraldehyde 3-phosphate and pyruvate: step 1/1. Catalyzes the acyloin condensation reaction between C atoms 2 and 3 of pyruvate and glyceraldehyde 3-phosphate to yield 1-deoxy-D-xylulose-5-phosphate (DXP). This Blochmanniella pennsylvanica (strain BPEN) protein is 1-deoxy-D-xylulose-5-phosphate synthase.